The primary structure comprises 267 residues: Glutamate racemase (267 aa).

Residues 13–14 (DS) and 45–46 (YS) each bind substrate. Catalysis depends on Cys77, which acts as the Proton donor/acceptor. 78–79 (NT) provides a ligand contact to substrate. The active-site Proton donor/acceptor is Cys188. Residue 189–190 (TH) participates in substrate binding.

This sequence belongs to the aspartate/glutamate racemases family.

It carries out the reaction L-glutamate = D-glutamate. Its pathway is cell wall biogenesis; peptidoglycan biosynthesis. In terms of biological role, provides the (R)-glutamate required for cell wall biosynthesis. This chain is Glutamate racemase, found in Histophilus somni (strain 129Pt) (Haemophilus somnus).